The following is a 232-amino-acid chain: Orotate phosphoribosyltransferase (232 aa).

Residues Arg-107, Lys-108, Lys-111, and 133–141 each bind 5-phospho-alpha-D-ribose 1-diphosphate; that span reads EDLTTDGGS. Thr-137 serves as a coordination point for orotate.

This sequence belongs to the purine/pyrimidine phosphoribosyltransferase family. PyrE subfamily. As to quaternary structure, homodimer. Mg(2+) is required as a cofactor.

The enzyme catalyses orotidine 5'-phosphate + diphosphate = orotate + 5-phospho-alpha-D-ribose 1-diphosphate. The protein operates within pyrimidine metabolism; UMP biosynthesis via de novo pathway; UMP from orotate: step 1/2. Its function is as follows. Catalyzes the transfer of a ribosyl phosphate group from 5-phosphoribose 1-diphosphate to orotate, leading to the formation of orotidine monophosphate (OMP). This chain is Orotate phosphoribosyltransferase, found in Cereibacter sphaeroides (strain ATCC 17025 / ATH 2.4.3) (Rhodobacter sphaeroides).